The following is an 87-amino-acid chain: Small ribosomal subunit protein uS17 (87 aa).

The protein belongs to the universal ribosomal protein uS17 family. As to quaternary structure, part of the 30S ribosomal subunit.

Functionally, one of the primary rRNA binding proteins, it binds specifically to the 5'-end of 16S ribosomal RNA. This Bacillus cytotoxicus (strain DSM 22905 / CIP 110041 / 391-98 / NVH 391-98) protein is Small ribosomal subunit protein uS17.